Here is a 303-residue protein sequence, read N- to C-terminus: Putative fimbrium subunit Fim1C (303 aa).

Positions 1–22 are cleaved as a signal peptide; sequence MKKQALICALLATVLLPGCSED.

This sequence belongs to the bacteroidetes fimbrillin superfamily. Mfa-like family. As to quaternary structure, may be part of the fimbrial tip.

It localises to the fimbrium. Putative component of the fimbrium tip. Fimbriae are filamentous appendages on the cell surface that mediate cell adhesion and biofilm formation. The chain is Putative fimbrium subunit Fim1C (fim1C) from Bacteroides uniformis (strain ATCC 8492 / DSM 6597 / CCUG 4942 / CIP 103695 / JCM 5828 / KCTC 5204 / NCTC 13054 / VPI 0061).